A 303-amino-acid polypeptide reads, in one-letter code: N-acetylmuramic acid 6-phosphate etherase (303 aa).

The disordered stretch occupies residues 1–21; that stretch reads MQPSQLRSLTTESRNPNTMGI. The SIS domain maps to 58–221; it reads AYDSISNGGR…STSVMIRQGK (164 aa). Catalysis depends on Glu86, which acts as the Proton donor. The active site involves Glu117.

Belongs to the GCKR-like family. MurNAc-6-P etherase subfamily. Homodimer.

The catalysed reaction is N-acetyl-D-muramate 6-phosphate + H2O = N-acetyl-D-glucosamine 6-phosphate + (R)-lactate. It functions in the pathway amino-sugar metabolism; N-acetylmuramate degradation. In terms of biological role, specifically catalyzes the cleavage of the D-lactyl ether substituent of MurNAc 6-phosphate, producing GlcNAc 6-phosphate and D-lactate. In Bacillus pumilus (strain SAFR-032), this protein is N-acetylmuramic acid 6-phosphate etherase.